A 337-amino-acid chain; its full sequence is DNA-directed RNA polymerase subunit alpha (337 aa).

The tract at residues 1-233 is alpha N-terminal domain (alpha-NTD); that stretch reads MVREKVTVST…DLFIPFLHME (233 aa). The alpha C-terminal domain (alpha-CTD) stretch occupies residues 265-337; the sequence is KKIALKSIFI…FVIDLAKNKF (73 aa).

This sequence belongs to the RNA polymerase alpha chain family. In terms of assembly, in plastids the minimal PEP RNA polymerase catalytic core is composed of four subunits: alpha, beta, beta', and beta''. When a (nuclear-encoded) sigma factor is associated with the core the holoenzyme is formed, which can initiate transcription.

The protein resides in the plastid. Its subcellular location is the chloroplast. It carries out the reaction RNA(n) + a ribonucleoside 5'-triphosphate = RNA(n+1) + diphosphate. In terms of biological role, DNA-dependent RNA polymerase catalyzes the transcription of DNA into RNA using the four ribonucleoside triphosphates as substrates. This Nicotiana sylvestris (Wood tobacco) protein is DNA-directed RNA polymerase subunit alpha.